We begin with the raw amino-acid sequence, 204 residues long: Large ribosomal subunit protein eL15 (204 aa).

This sequence belongs to the eukaryotic ribosomal protein eL15 family. In terms of assembly, component of the large ribosomal subunit.

The protein resides in the cytoplasm. Its function is as follows. Component of the large ribosomal subunit. The ribosome is a large ribonucleoprotein complex responsible for the synthesis of proteins in the cell. This chain is Large ribosomal subunit protein eL15 (rpl15), found in Mylopharyngodon piceus (Black carp).